The following is a 214-amino-acid chain: Probable nicotinate-nucleotide adenylyltransferase (214 aa).

The protein belongs to the NadD family.

The catalysed reaction is nicotinate beta-D-ribonucleotide + ATP + H(+) = deamido-NAD(+) + diphosphate. It participates in cofactor biosynthesis; NAD(+) biosynthesis; deamido-NAD(+) from nicotinate D-ribonucleotide: step 1/1. Its function is as follows. Catalyzes the reversible adenylation of nicotinate mononucleotide (NaMN) to nicotinic acid adenine dinucleotide (NaAD). The protein is Probable nicotinate-nucleotide adenylyltransferase of Mycolicibacterium vanbaalenii (strain DSM 7251 / JCM 13017 / BCRC 16820 / KCTC 9966 / NRRL B-24157 / PYR-1) (Mycobacterium vanbaalenii).